Reading from the N-terminus, the 428-residue chain is Immunoglobulin superfamily containing leucine-rich repeat protein (428 aa).

Positions 1–18 (MQELHLLWWALLLGLAQA) are cleaved as a signal peptide. One can recognise an LRRNT domain in the interval 19-50 (CPEPCDCGEKYGFQIADCAYRDLESVPPGFPA). The N-linked (GlcNAc...) asparagine glycan is linked to Asn-51. 5 LRR repeats span residues 51 to 72 (NVTT…AFRE), 75 to 96 (LLQS…ALAS), 99 to 122 (HLKS…HNLS), 123 to 144 (ALQL…AFRS), and 147 to 168 (ALRS…TFTP). One can recognise an LRRCT domain in the interval 180-231 (NPFDCTCGIVWLKTWALTTAVSIPEQDNIACTSPHVLKGTPLSRLPPLPCSA). Positions 232–343 (PSVQLSYQPS…GSAESSVDVA (112 aa)) constitute an Ig-like domain. Cys-257 and Cys-327 form a disulfide bridge. An N-linked (GlcNAc...) asparagine glycan is attached at Asn-309.

In terms of tissue distribution, expressed in various tissues including retina, heart, skeletal muscle, prostate, ovary, small intestine, thyroid, adrenal cortex, testis, stomach and spinal cord.

It localises to the secreted. The chain is Immunoglobulin superfamily containing leucine-rich repeat protein (ISLR) from Homo sapiens (Human).